Reading from the N-terminus, the 493-residue chain is Glutamyl-tRNA(Gln) amidotransferase subunit A (493 aa).

Residues Lys79 and Ser159 each act as charge relay system in the active site. The Acyl-ester intermediate role is filled by Ser183.

This sequence belongs to the amidase family. GatA subfamily. Heterotrimer of A, B and C subunits.

The catalysed reaction is L-glutamyl-tRNA(Gln) + L-glutamine + ATP + H2O = L-glutaminyl-tRNA(Gln) + L-glutamate + ADP + phosphate + H(+). Functionally, allows the formation of correctly charged Gln-tRNA(Gln) through the transamidation of misacylated Glu-tRNA(Gln) in organisms which lack glutaminyl-tRNA synthetase. The reaction takes place in the presence of glutamine and ATP through an activated gamma-phospho-Glu-tRNA(Gln). The protein is Glutamyl-tRNA(Gln) amidotransferase subunit A of Brucella suis (strain ATCC 23445 / NCTC 10510).